A 419-amino-acid polypeptide reads, in one-letter code: L-rhamnose isomerase (419 aa).

Mn(2+) contacts are provided by H262, D294, and D296.

This sequence belongs to the rhamnose isomerase family. As to quaternary structure, homotetramer. Requires Mn(2+) as cofactor.

It localises to the cytoplasm. It catalyses the reaction L-rhamnopyranose = L-rhamnulose. The protein operates within carbohydrate degradation; L-rhamnose degradation; glycerone phosphate from L-rhamnose: step 1/3. Functionally, catalyzes the interconversion of L-rhamnose and L-rhamnulose. The protein is L-rhamnose isomerase of Citrobacter koseri (strain ATCC BAA-895 / CDC 4225-83 / SGSC4696).